Here is a 119-residue protein sequence, read N- to C-terminus: Large ribosomal subunit protein bL20 (119 aa).

Belongs to the bacterial ribosomal protein bL20 family.

In terms of biological role, binds directly to 23S ribosomal RNA and is necessary for the in vitro assembly process of the 50S ribosomal subunit. It is not involved in the protein synthesizing functions of that subunit. The sequence is that of Large ribosomal subunit protein bL20 from Bordetella bronchiseptica (strain ATCC BAA-588 / NCTC 13252 / RB50) (Alcaligenes bronchisepticus).